The following is a 648-amino-acid chain: Leucine-rich repeat transmembrane protein FLRT3 (648 aa).

An N-terminal signal peptide occupies residues 1–28 (MSTETWNLFVAWAQLLLLFRISPQYVNA). At 29 to 527 (KPCPSVCRCD…KEPYKNSSLP (499 aa)) the chain is on the extracellular side. The LRRNT domain occupies 30 to 62 (PCPSVCRCDGGFIYCNDRDLTSIPSGIPDDATT). Cystine bridges form between C31–C37 and C35–C44. LRR repeat units lie at residues 58-82 (DDAT…LRGL), 83-105 (DKVE…LPKN), 107-126 (KELH…ALSQ), 127-152 (IPSI…AFRD), 154-179 (IFLR…TIEE), 181-197 (RLDD…SLQD), 198-223 (LTNL…VFMN), 225-246 (INLT…NLPG), 247-269 (TNLR…AFAD), and 270-293 (LTQL…IFDD). A glycan (N-linked (GlcNAc...) asparagine) is linked at N226. The 52-residue stretch at 305-356 (NPWYCGCKMKWVRDWLQSLPSKVNVRGLMCQAPERVRGMTIKDLNKELFDCK) folds into the LRRCT domain. Residues C309 and C334 are joined by a disulfide bond. The region spanning 409 to 503 (KIITIQVKSI…VCIETETAPL (95 aa)) is the Fibronectin type-III domain. The chain crosses the membrane as a helical span at residues 528–548 (LAAIIGGAVALVAITLLALVC). Topologically, residues 549–648 (WYVHRNGSLF…GIPDSDHSHS (100 aa)) are cytoplasmic. Residues 624 to 633 (NSHSESSSNR) show a composition bias toward low complexity. The interval 624-648 (NSHSESSSNRSYRDSGIPDSDHSHS) is disordered.

In terms of assembly, interacts with fgfr1 and fgfr4. Interacts with rnd1, cdh1 and pcdh8. Interacts (via extracellular domain) with unc5b and unc5d (via extracellular domain). In terms of processing, N-glycosylated. Proteolytic cleavage in the juxtamembrane region gives rise to a soluble ectodomain. Cleavage is probably effected by a metalloprotease.

The protein localises to the cell membrane. The protein resides in the endoplasmic reticulum membrane. It localises to the cell junction. Its subcellular location is the focal adhesion. It is found in the secreted. The protein localises to the cell projection. The protein resides in the axon. It localises to the growth cone membrane. Functions in cell-cell adhesion, cell migration and axon guidance, exerting an attractive or repulsive role depending on its interaction partners. Modulates cadherin-dependent cell-cell adhesion and cell sorting. Plays a role in the spatial organization of brain neurons. Plays a role in vascular development. Plays a role in cell-cell adhesion via its interaction with latrophilins that are expressed at the surface of adjacent cells. Mediates axon attraction towards cells expressing ntn1. mediates axon growth cone collapse and plays a repulsive role in neuron guidance via its interaction with unc-5 family members. Plays a role in the regulation of the density of glutamaergic synapses. Plays a role in signaling cascades downstream of fgfr1, and possibly also other fgfr family members. Plays a role in embryonic morphogenesis, but not in embryonic patterning. This Xenopus tropicalis (Western clawed frog) protein is Leucine-rich repeat transmembrane protein FLRT3.